A 314-amino-acid polypeptide reads, in one-letter code: Cytochrome f (314 aa).

A signal peptide spans 1–30; the sequence is MATNKFFKSLLFALTIAINSFGFCIQDAVA. Residues Y31, C51, C54, and H55 each contribute to the heme site. Residues 280 to 300 traverse the membrane as a helical segment; the sequence is IYGYLAFCFSVLITQIMLVLK.

This sequence belongs to the cytochrome f family. In terms of assembly, the 4 large subunits of the cytochrome b6-f complex are cytochrome b6, subunit IV (17 kDa polypeptide, petD), cytochrome f and the Rieske protein, while the 4 small subunits are PetG, PetL, PetM and PetN. The complex functions as a dimer. Heme is required as a cofactor.

The protein resides in the plastid. It is found in the chloroplast thylakoid membrane. Its function is as follows. Component of the cytochrome b6-f complex, which mediates electron transfer between photosystem II (PSII) and photosystem I (PSI), cyclic electron flow around PSI, and state transitions. This Phaeodactylum tricornutum (strain CCAP 1055/1) protein is Cytochrome f.